Consider the following 322-residue polypeptide: PI-PLC X domain-containing protein 3 (322 aa).

The 176-residue stretch at 22–197 folds into the PI-PLC X-box domain; the sequence is TLHGIPLTNL…EYQVLVFYHN (176 aa). Residues histidine 37 and histidine 114 contribute to the active site.

In Danio rerio (Zebrafish), this protein is PI-PLC X domain-containing protein 3 (plcxd3).